Reading from the N-terminus, the 358-residue chain is Peptide chain release factor 2 (358 aa).

Gln242 is modified (N5-methylglutamine).

It belongs to the prokaryotic/mitochondrial release factor family. In terms of processing, methylated by PrmC. Methylation increases the termination efficiency of RF2.

It localises to the cytoplasm. Functionally, peptide chain release factor 2 directs the termination of translation in response to the peptide chain termination codons UGA and UAA. This chain is Peptide chain release factor 2 (prfB), found in Borreliella burgdorferi (strain ATCC 35210 / DSM 4680 / CIP 102532 / B31) (Borrelia burgdorferi).